A 2223-amino-acid polypeptide reads, in one-letter code: Protein Ycf2 (2223 aa).

Position 1576-1583 (1576-1583 (GSIGTGRS)) interacts with ATP.

Belongs to the Ycf2 family.

Its subcellular location is the plastid. The protein resides in the chloroplast stroma. Functionally, probable ATPase of unknown function. Its presence in a non-photosynthetic plant (Epifagus virginiana) and experiments in tobacco indicate that it has an essential function which is probably not related to photosynthesis. In Silene latifolia (White campion), this protein is Protein Ycf2.